A 384-amino-acid chain; its full sequence is GDSL esterase/lipase At1g71691 (384 aa).

The N-terminal stretch at 1–27 (MAFHFRRLCFFSALLAVVLQLLHGVSG) is a signal peptide. S62 acts as the Nucleophile in catalysis. Catalysis depends on residues D348 and H351.

The protein belongs to the 'GDSL' lipolytic enzyme family.

The protein localises to the secreted. This Arabidopsis thaliana (Mouse-ear cress) protein is GDSL esterase/lipase At1g71691.